Reading from the N-terminus, the 83-residue chain is Cytochrome b559 subunit alpha (83 aa).

Residues 21-35 form a helical membrane-spanning segment; the sequence is VIHSITIPSLFIAGW. His23 is a heme binding site.

This sequence belongs to the PsbE/PsbF family. In terms of assembly, heterodimer of an alpha subunit and a beta subunit. PSII is composed of 1 copy each of membrane proteins PsbA, PsbB, PsbC, PsbD, PsbE, PsbF, PsbH, PsbI, PsbJ, PsbK, PsbL, PsbM, PsbT, PsbX, PsbY, PsbZ, Psb30/Ycf12, at least 3 peripheral proteins of the oxygen-evolving complex and a large number of cofactors. It forms dimeric complexes. Heme b is required as a cofactor.

It localises to the plastid. The protein resides in the chloroplast thylakoid membrane. This b-type cytochrome is tightly associated with the reaction center of photosystem II (PSII). PSII is a light-driven water:plastoquinone oxidoreductase that uses light energy to abstract electrons from H(2)O, generating O(2) and a proton gradient subsequently used for ATP formation. It consists of a core antenna complex that captures photons, and an electron transfer chain that converts photonic excitation into a charge separation. The protein is Cytochrome b559 subunit alpha of Piper cenocladum (Ant piper).